Consider the following 490-residue polypeptide: Pup--protein ligase (490 aa).

E9 is a binding site for Mg(2+). R53 serves as a coordination point for ATP. Position 55 (Y55) interacts with Mg(2+). The active-site Proton acceptor is D57. E63 provides a ligand contact to Mg(2+). S66 lines the ATP pocket. The disordered stretch occupies residues K160–P181. Position 441 (W441) interacts with ATP.

Belongs to the Pup ligase/Pup deamidase family. Pup-conjugating enzyme subfamily.

The enzyme catalyses ATP + [prokaryotic ubiquitin-like protein]-L-glutamate + [protein]-L-lysine = ADP + phosphate + N(6)-([prokaryotic ubiquitin-like protein]-gamma-L-glutamyl)-[protein]-L-lysine.. Its pathway is protein degradation; proteasomal Pup-dependent pathway. It participates in protein modification; protein pupylation. Functionally, catalyzes the covalent attachment of the prokaryotic ubiquitin-like protein modifier Pup to the proteasomal substrate proteins, thereby targeting them for proteasomal degradation. This tagging system is termed pupylation. The ligation reaction involves the side-chain carboxylate of the C-terminal glutamate of Pup and the side-chain amino group of a substrate lysine. This chain is Pup--protein ligase, found in Rothia mucilaginosa (strain DY-18) (Stomatococcus mucilaginosus).